We begin with the raw amino-acid sequence, 348 residues long: 2-methyl-6-phytyl-1,4-hydroquinone methyltransferase 2, chloroplastic (348 aa).

The tract at residues 1 to 48 (MAMASSAYAPAGGVGTHSAPGRIRPPRGLGFSTTTTKSRPLVLTRRGG) is disordered. A chloroplast-targeting transit peptide spans 1–59 (MAMASSAYAPAGGVGTHSAPGRIRPPRGLGFSTTTTKSRPLVLTRRGGGGGNISVARLR). Topologically, residues 60-317 (CAASSSSAAA…PVNPITFLFR (258 aa)) are chloroplast intermembrane. The interval 125 to 134 (VVDVGGGTGF) is SAM motif I. Residues 170–183 (VTIMEGDAEDLPFP) form an SAM motif II region. Positions 211–224 (RVLRLGGVACMIGP) are SAM motif III. The chain crosses the membrane as a helical span at residues 318-338 (FLMGTICAAYYVLVPIYMWIK). Over 339 to 348 (DQIVPKGMPI) the chain is Stromal.

The protein belongs to the class I-like SAM-binding methyltransferase superfamily. MPBQ/MBSQ MT family.

It is found in the plastid. It localises to the chloroplast inner membrane. The enzyme catalyses 2-methyl-6-phytyl-1,4-benzene-1,4-diol + S-adenosyl-L-methionine = 2,3-dimethyl-6-phytylbenzene-1,4-diol + S-adenosyl-L-homocysteine + H(+). It carries out the reaction 2-methyl-6-(all-trans-nonaprenyl)benzene-1,4-diol + S-adenosyl-L-methionine = plastoquinol-9 + S-adenosyl-L-homocysteine + H(+). The catalysed reaction is 6-geranylgeranyl-2-methylbenzene-1,4-diol + S-adenosyl-L-methionine = 6-geranylgeranyl-2,3-dimethylbenzene-1,4-diol + S-adenosyl-L-homocysteine + H(+). The protein operates within cofactor biosynthesis; tocopherol biosynthesis. Functionally, involved in a key methylation step in both tocopherols (vitamin E) and plastoquinone synthesis. Catalyzes the conversion of 2-methyl-6-phytyl-1,4-hydroquinone (MPBQ) to 2,3-dimethyl-6-phytyl-1,4-hydroquinone (DMPQ, a substrate for tocopherol cyclase), and 2-methyl-6-solanyl-1,4-benzoquinone (MSBQ) to plastoquinone. This chain is 2-methyl-6-phytyl-1,4-hydroquinone methyltransferase 2, chloroplastic, found in Oryza sativa subsp. japonica (Rice).